The chain runs to 177 residues: ATP synthase subunit b (177 aa).

The helical transmembrane segment at 35–55 (FFVVLAIFLIVLAVIGTFVVP) threads the bilayer.

The protein belongs to the ATPase B chain family. As to quaternary structure, F-type ATPases have 2 components, F(1) - the catalytic core - and F(0) - the membrane proton channel. F(1) has five subunits: alpha(3), beta(3), gamma(1), delta(1), epsilon(1). F(0) has three main subunits: a(1), b(2) and c(10-14). The alpha and beta chains form an alternating ring which encloses part of the gamma chain. F(1) is attached to F(0) by a central stalk formed by the gamma and epsilon chains, while a peripheral stalk is formed by the delta and b chains.

It is found in the cell membrane. Its function is as follows. F(1)F(0) ATP synthase produces ATP from ADP in the presence of a proton or sodium gradient. F-type ATPases consist of two structural domains, F(1) containing the extramembraneous catalytic core and F(0) containing the membrane proton channel, linked together by a central stalk and a peripheral stalk. During catalysis, ATP synthesis in the catalytic domain of F(1) is coupled via a rotary mechanism of the central stalk subunits to proton translocation. Functionally, component of the F(0) channel, it forms part of the peripheral stalk, linking F(1) to F(0). The sequence is that of ATP synthase subunit b from Mycobacteroides abscessus (strain ATCC 19977 / DSM 44196 / CCUG 20993 / CIP 104536 / JCM 13569 / NCTC 13031 / TMC 1543 / L948) (Mycobacterium abscessus).